The sequence spans 322 residues: NADH-quinone oxidoreductase subunit H (322 aa).

The next 8 membrane-spanning stretches (helical) occupy residues 15–35 (IFQS…MSVV), 81–101 (ITFL…ITII), 114–134 (IGVL…LLAG), 149–169 (ATAQ…GVVA), 184–204 (IGLW…IAGL), 237–257 (FFIG…TMFF), 265–285 (FPSY…FILI), and 299–319 (LFGW…TALI).

This sequence belongs to the complex I subunit 1 family. NDH-1 is composed of 13 different subunits. Subunits NuoA, H, J, K, L, M, N constitute the membrane sector of the complex.

Its subcellular location is the cell membrane. It catalyses the reaction a quinone + NADH + 5 H(+)(in) = a quinol + NAD(+) + 4 H(+)(out). In terms of biological role, NDH-1 shuttles electrons from NADH, via FMN and iron-sulfur (Fe-S) centers, to quinones in the respiratory chain. The immediate electron acceptor for the enzyme in this species is believed to be ubiquinone. Couples the redox reaction to proton translocation (for every two electrons transferred, four hydrogen ions are translocated across the cytoplasmic membrane), and thus conserves the redox energy in a proton gradient. This subunit may bind ubiquinone. The protein is NADH-quinone oxidoreductase subunit H of Buchnera aphidicola subsp. Baizongia pistaciae (strain Bp).